The sequence spans 548 residues: LDL receptor repeat-containing protein egg-2 (548 aa).

Topologically, residues 1-49 (MSQQAGNAQRGRFDEEPMSLGEKISHRMDQLKEIVSSSCPCAGKFPPVA) are cytoplasmic. Residues 50-70 (IVLIVALIILGVIIAVPLVIF) form a helical; Signal-anchor for type II membrane protein membrane-spanning segment. Topologically, residues 71–548 (LSPSAQAMSS…LALKNSGLRP (478 aa)) are extracellular. An N-linked (GlcNAc...) asparagine glycan is attached at Asn-119. 8 consecutive LDL-receptor class A domains span residues 122-160 (TCSG…ENCK), 161-213 (ECQS…ASCR), 215-252 (KCSK…SNCN), 253-288 (KCQK…HQCD), 291-328 (TCSG…ENCP), 370-412 (KCDP…KKCT), 416-454 (ECVV…KGCD), and 455-492 (KCPS…HKCS). 23 disulfides stabilise this stretch: Cys-130–Cys-150, Cys-144–Cys-159, Cys-162–Cys-190, Cys-168–Cys-203, Cys-197–Cys-212, Cys-216–Cys-229, Cys-223–Cys-242, Cys-236–Cys-251, Cys-254–Cys-265, Cys-261–Cys-278, Cys-272–Cys-287, Cys-292–Cys-305, Cys-300–Cys-318, Cys-312–Cys-327, Cys-371–Cys-389, Cys-379–Cys-402, Cys-396–Cys-411, Cys-417–Cys-431, Cys-427–Cys-444, Cys-438–Cys-453, Cys-456–Cys-469, Cys-463–Cys-482, and Cys-476–Cys-491. Asn-244 is a glycosylation site (N-linked (GlcNAc...) asparagine). Asn-527 is a glycosylation site (N-linked (GlcNAc...) asparagine).

Its subcellular location is the cell membrane. The protein resides in the endosome membrane. In terms of biological role, probable receptor which is required for the oocyte-to-zygote transition although its exact function is controversial. Redundantly with egg-1, seems to be required for fertilization probably by promoting the interaction or fusion between sperm and oocyte. Conversely, shown to be dispensable for fertilization but required together with egg-1 for the formation of a continuous and cohesive eggshell chitin layer by maintaining a homogenous distribution of chitin synthase chs-1 at the unfertilized oocyte cell membrane. Appears to recruit or maintain together to the unfertilized oocyte cortex several proteins including chs-1, kinase mbk-2 and pseudophosphatase egg-3, and possibly egg-4 and egg-5. In Caenorhabditis elegans, this protein is LDL receptor repeat-containing protein egg-2.